We begin with the raw amino-acid sequence, 67 residues long: Beta-defensin 36 (67 aa).

The signal sequence occupies residues 1-22; the sequence is MKLLLLTLAALLLVSQLTPGDA. Disulfide bonds link C25-C52, C32-C46, and C36-C53.

This sequence belongs to the beta-defensin family.

Its subcellular location is the secreted. In terms of biological role, has antibacterial activity. The protein is Beta-defensin 36 (Defb36) of Mus musculus (Mouse).